Reading from the N-terminus, the 1146-residue chain is TAWTFLKAMQKCSKKREARGSREAPETNFPDTTEESAQQICCTRDSSDSKSVPRSERNKKGIQCQGEGSSRGSQPGQFVGVTYNLEKRPTTIVLINDTPLNVLLDTGADTSVLTTAHYNRLKYRGRKYQGTGIIGVGGNVETFSTPVTIKKKGRHIKTRMLVADIPVTILGRDILQDLGAKLVLAQLSKEIKFRKIELKEGTMGPKIPQWPLTKEKLEGAKEIVQRLLSEGKISEASDNNPYNSPIFVIKKRSGKWRLLQDLRELNKTVQVGTEISRGLPHPGGLIKCKHMTVLDIGDAYFTIPLDPEFRPYTAFTIPSINHQEPDKRYVWNCLPQGFVLSPYIYQKTLQEILQPFRERYPEVQLYQYMDDLFVGSNGSKKQHKELIIELRAILLEEGFETPDDKLQEVPPYSWLGYQLCPENWKVQKMQLDMVKNPTLNDVQKLMGNITWMSSGVPGLTVKHIAATTKGCLELNQKVIWTEEAQKELEENNEKIKNAQGLQYYNPEEEMLCEVEITKNYEATYVIKQSQGILWAGKKIMKANKGWSTVKNLMLLLQHVATESITRVGKCPTFKVPFTKEQVMWEMQKGWYYSWLPEIVYTHQVVHDDWRMKLVEEPTSGITIYTDGGKQNGEGIAAYVTSNGRTKQKRLGPVTHQVAERMAIQMALEDTRDKQVNIVTDSYYCWKNITEGLGLEGPQSPWWPIIQNIREKEIVYFAWVPGHKGICGNQLADEAAKIKEEIMLAYQGTQIKEKRDEDAGFDLCVPYDIMIPVSDTKIIPTDVKIQVPPNSFGWVTGKSSMAKQGLLINGGIIDEGYTGEIQVICTNIGKSNIKLIEGQKFAQLIILQHHSNSRQPWDENKISQRGDKGFGSTGVFWVENIQEAQDEHENWHTSPKILARNYKIPLTVAKQITQECPHCTKQGSGPAGCVMRSPNHWQADCTHLDNKIILTFVESNSGYIHATLLSKENALCTSLAILEWARLFSPKSLHTDNGTNFVAEPVVNLLKFLKIAHTTGIPYHPESQGIVERANRTLKEKIQSHRDNTQTLEAALQLALITCNKGRESMGGQTPWEVFITNQAQVIHEKLLLQQAQSSKKFCFYKIPGEHDWKGPTRVLWKGDGAVVVNDEGKGIIAVPLTRTKLLIKPN.

The disordered stretch occupies residues 13–77; that stretch reads SKKREARGSR…GSSRGSQPGQ (65 aa). Positions 29-41 are enriched in polar residues; sequence FPDTTEESAQQIC. Residues 45 to 59 are compositionally biased toward basic and acidic residues; the sequence is DSSDSKSVPRSERNK. Residues 66–76 are compositionally biased toward polar residues; that stretch reads GEGSSRGSQPG. The Peptidase A2 domain maps to 100 to 174; it reads LNVLLDTGAD…IPVTILGRDI (75 aa). Aspartate 105 is a catalytic residue. Residues 230–419 enclose the Reverse transcriptase domain; it reads EGKISEASDN…PPYSWLGYQL (190 aa). The 124-residue stretch at 617 to 740 folds into the RNase H type-1 domain; it reads PTSGITIYTD…ADEAAKIKEE (124 aa). The Integrase-type zinc-finger motif lies at 878 to 919; sequence ENIQEAQDEHENWHTSPKILARNYKIPLTVAKQITQECPHCT. Residues histidine 887, histidine 891, cysteine 915, and cysteine 918 each contribute to the Zn(2+) site. An Integrase catalytic domain is found at 921 to 1078; sequence QGSGPAGCVM…TPWEVFITNQ (158 aa). Residues 1096 to 1144 constitute a DNA-binding region (integrase-type); sequence KFCFYKIPGEHDWKGPTRVLWKGDGAVVVNDEGKGIIAVPLTRTKLLIK.

Belongs to the retroviral Pol polyprotein family. Specific enzymatic cleavages in vivo yield mature proteins.

It carries out the reaction Endohydrolysis of RNA in RNA/DNA hybrids. Three different cleavage modes: 1. sequence-specific internal cleavage of RNA. Human immunodeficiency virus type 1 and Moloney murine leukemia virus enzymes prefer to cleave the RNA strand one nucleotide away from the RNA-DNA junction. 2. RNA 5'-end directed cleavage 13-19 nucleotides from the RNA end. 3. DNA 3'-end directed cleavage 15-20 nucleotides away from the primer terminus.. It catalyses the reaction 3'-end directed exonucleolytic cleavage of viral RNA-DNA hybrid.. The enzyme catalyses DNA(n) + a 2'-deoxyribonucleoside 5'-triphosphate = DNA(n+1) + diphosphate. In terms of biological role, during replicative cycle of retroviruses, the reverse-transcribed viral DNA is integrated into the host chromosome by the viral integrase enzyme. RNase H activity is associated with the reverse transcriptase. In Equine infectious anemia virus (isolate 1369) (EIAV), this protein is Pol polyprotein (pol).